The primary structure comprises 369 residues: Biglycan (369 aa).

Positions 1 to 16 are cleaved as a signal peptide; the sequence is MCPLWLLAALLALSQA. Residues 17 to 37 constitute a propeptide that is removed on maturation; sequence LPFEQKAFWDFTLDDGLPMLN. Residues Ser-42 and Ser-48 are each glycosylated (O-linked (Xyl...) (glycosaminoglycan) serine). Disulfide bonds link Cys-64-Cys-70 and Cys-68-Cys-77. LRR repeat units lie at residues 83–103, 104–127, 128–151, 152–172, 173–196, 197–221, 222–242, 243–266, 267–290, 291–313, 314–343, and 344–369; these read KAVP…NNDI, SELR…NNKI, SKIH…KNHL, VEIP…DNRI, RKVP…GNPL, ENSG…EAKL, TGIP…HNKI, QAIE…HNQI, RMIE…NNKL, SRVP…TNNI, TKVG…NNPV, and PYWE…NYKK. Residues Asn-271 and Asn-312 are each glycosylated (N-linked (GlcNAc...) asparagine). A disulfide bond links Cys-322 and Cys-355.

This sequence belongs to the small leucine-rich proteoglycan (SLRP) family. SLRP class I subfamily. As to quaternary structure, homodimer. Forms a ternary complex with MFAP2 and ELN. The two attached glycosaminoglycan chains can be either chondroitin sulfate or dermatan sulfate. In terms of tissue distribution, found in several connective tissues, especially in articular cartilages.

It is found in the secreted. It localises to the extracellular space. The protein resides in the extracellular matrix. Its function is as follows. May be involved in collagen fiber assembly. The polypeptide is Biglycan (BGN) (Ovis aries (Sheep)).